Consider the following 23-residue polypeptide: Glutamine synthetase (23 aa).

The protein belongs to the glutamine synthetase family. In terms of assembly, oligomer of 12 subunits arranged in the form of two hexagons. Requires Mg(2+) as cofactor.

Its subcellular location is the cytoplasm. The catalysed reaction is L-glutamate + NH4(+) + ATP = L-glutamine + ADP + phosphate + H(+). Its activity is regulated as follows. The activity of this enzyme could be controlled by adenylation under conditions of abundant glutamine. Its function is as follows. Involved in nitrogen metabolism via ammonium assimilation. Catalyzes the ATP-dependent biosynthesis of glutamine from glutamate and ammonia. In Phormidium lapideum, this protein is Glutamine synthetase.